The chain runs to 544 residues: Glucans biosynthesis protein G (544 aa).

Residues 1 to 34 (MVSLLRCQSSKPYSSLICSLALGVAFALSGTAYA) form the signal peptide.

Belongs to the OpgD/OpgG family.

The protein resides in the periplasm. Its pathway is glycan metabolism; osmoregulated periplasmic glucan (OPG) biosynthesis. Functionally, involved in the biosynthesis of osmoregulated periplasmic glucans (OPGs). This Shewanella putrefaciens (strain CN-32 / ATCC BAA-453) protein is Glucans biosynthesis protein G.